Consider the following 237-residue polypeptide: AA9 family lytic polysaccharide monooxygenase C (237 aa).

Residues 1 to 15 (MKVLAPLILAGAASA) form the signal peptide. 2 residues coordinate Cu(2+): His-16 and His-99. 2 disulfide bridges follow: Cys-54-Cys-185 and Cys-155-Cys-237. An N-linked (GlcNAc...) asparagine glycan is attached at Asn-112. O2 is bound by residues His-171 and Gln-180. Tyr-182 is a Cu(2+) binding site.

It belongs to the polysaccharide monooxygenase AA9 family. The cofactor is Cu(2+).

It is found in the secreted. It catalyses the reaction [(1-&gt;4)-beta-D-glucosyl]n+m + reduced acceptor + O2 = 4-dehydro-beta-D-glucosyl-[(1-&gt;4)-beta-D-glucosyl]n-1 + [(1-&gt;4)-beta-D-glucosyl]m + acceptor + H2O.. Is able to utilize various natural phenolic compounds as reducing agents. Most of these reducing agents are present in plants, either free or as lignin building blocks, such as sinapic acid, or as flavonoids such as catechin and dopamine. Phenolic compounds with 1,2-benzenediol and 1,2,3-benzenetriol moieties yield the highest release of oxidized and non-oxidized glucooligosaccharides from cellulose compared to monophenols or sulfur-containing compounds. Functionally, lytic polysaccharide monooxygenase (LPMO) that depolymerizes crystalline and amorphous polysaccharides via the oxidation of scissile alpha- or beta-(1-4)-glycosidic bonds, yielding C4 oxidation products. Catalysis by LPMOs requires the reduction of the active-site copper from Cu(II) to Cu(I) by a reducing agent and H(2)O(2) or O(2) as a cosubstrate. Shows oxidative cleavage of beta-(1-3, 1-4)-glucan from oat spelt or xyloglucan from tamarind seed, in addition to cellulose. This chain is AA9 family lytic polysaccharide monooxygenase C, found in Thermothelomyces thermophilus (strain ATCC 42464 / BCRC 31852 / DSM 1799) (Sporotrichum thermophile).